We begin with the raw amino-acid sequence, 723 residues long: Aspartate--tRNA(Asp/Asn) ligase 1 (723 aa).

E206 contributes to the L-aspartate binding site. The tract at residues 230 to 233 (QLFK) is aspartate. R252 contributes to the L-aspartate binding site. Residues 252–254 (RDE) and Q261 each bind ATP. H481 provides a ligand contact to L-aspartate. E516 lines the ATP pocket. R523 lines the L-aspartate pocket. 568–571 (GMDR) provides a ligand contact to ATP.

Belongs to the class-II aminoacyl-tRNA synthetase family. Type 1 subfamily. In terms of assembly, homodimer.

Its subcellular location is the cytoplasm. It carries out the reaction tRNA(Asx) + L-aspartate + ATP = L-aspartyl-tRNA(Asx) + AMP + diphosphate. Functionally, aspartyl-tRNA synthetase with relaxed tRNA specificity since it is able to aspartylate not only its cognate tRNA(Asp) but also tRNA(Asn). Reaction proceeds in two steps: L-aspartate is first activated by ATP to form Asp-AMP and then transferred to the acceptor end of tRNA(Asp/Asn). The protein is Aspartate--tRNA(Asp/Asn) ligase 1 of Syntrophus aciditrophicus (strain SB).